The sequence spans 147 residues: HTH-type transcriptional regulator HmrR (147 aa).

Residues 1–69 enclose the HTH merR-type domain; the sequence is MNIGEASKVS…VEQIKELLAL (69 aa). The H-T-H motif DNA-binding region spans 4-23; the sequence is GEASKVSGVSSKMIRYYEQI.

Homodimer.

Its subcellular location is the cytoplasm. Regulates the transcription of actP. It detects cytoplasmic copper stress and activates transcription in response to increasing copper concentrations. In the absence of copper, it negatively regulates the transcription of actP. The sequence is that of HTH-type transcriptional regulator HmrR (hmrR) from Sinorhizobium medicae (strain WSM419) (Ensifer medicae).